Reading from the N-terminus, the 153-residue chain is Small ribosomal subunit protein uS5c (153 aa).

The 64-residue stretch at 11 to 74 (WQERVIQIRR…VDAKKQLINI (64 aa)) folds into the S5 DRBM domain.

It belongs to the universal ribosomal protein uS5 family. As to quaternary structure, part of the 30S ribosomal subunit. Contacts protein S4.

The protein resides in the plastid. Its subcellular location is the chloroplast. With S4 and S12 plays an important role in translational accuracy. The chain is Small ribosomal subunit protein uS5c (rps5) from Cyanidioschyzon merolae (strain NIES-3377 / 10D) (Unicellular red alga).